A 463-amino-acid polypeptide reads, in one-letter code: MSNRMWGGRFASGPAEIMEEINASIGFDRRLAPQDIRGSLAHVAMLGSRGILPAEDVAAIEAGLKSVEAEIERGEFVFRRELEDIHMAVESRLTEIVGPAAGRLHTARSRNDQVATDMRLWVRDTLDALDAQVADLQRALAETAQKHADTVMPGFTHLQSAQPVTFGHHCLAYVEMLARDRGRFRDARARLNECPLGSAALAGTSFPIDRHATAAALGFDRPTANSLDSVADRDFALESLSAASICAVHLSRFAEELVVWTSAQFGFVRLSDRFTTGSSIMPQKRNPDAAELVRAKAGRIIGALTGLLVVMKGLPLAYSKDMQEDKEGTFDALQSLSLCLAAMAGMVRDLEPVAETLKRAAGSGYATATDLADWLVRELNMPFRQAHHVTGRVVAAASERGIGLEDLSLDAMQAIEPGITQAVFAVLGVENSVASRTSYGGTAPDNVRRQAQAWLERLGPVEK.

It belongs to the lyase 1 family. Argininosuccinate lyase subfamily.

The protein resides in the cytoplasm. It carries out the reaction 2-(N(omega)-L-arginino)succinate = fumarate + L-arginine. It participates in amino-acid biosynthesis; L-arginine biosynthesis; L-arginine from L-ornithine and carbamoyl phosphate: step 3/3. In Methylorubrum populi (strain ATCC BAA-705 / NCIMB 13946 / BJ001) (Methylobacterium populi), this protein is Argininosuccinate lyase.